A 248-amino-acid polypeptide reads, in one-letter code: Glutaredoxin domain-containing cysteine-rich protein 2 (248 aa).

Basic and acidic residues-rich tracts occupy residues Met-1–Pro-16 and Leu-157–Arg-172. 2 disordered regions span residues Met-1 to Arg-20 and Glu-150 to Arg-172.

This sequence belongs to the GRXCR2 family. As to quaternary structure, interacts with TPRN; the interaction restricts TPRN to the stereocilum basal region.

The protein resides in the cell projection. Its subcellular location is the stereocilium. Required for hearing. Plays a role in maintaining cochlear stereocilia bundles that are involved in sound detection. Ensures the restriction of TPRN to the basal region of stereocilia in hair cells. The protein is Glutaredoxin domain-containing cysteine-rich protein 2 (GRXCR2) of Homo sapiens (Human).